The sequence spans 161 residues: Phosphopantetheine adenylyltransferase (161 aa).

Ser-9 is a substrate binding site. ATP-binding positions include 9–10 and His-17; that span reads SF. Residues Lys-41, Thr-73, and Arg-87 each contribute to the substrate site. Residues 88–90, Glu-98, and 123–129 contribute to the ATP site; these read GIR and YQYVSSS.

It belongs to the bacterial CoaD family. In terms of assembly, homohexamer. Requires Mg(2+) as cofactor.

It localises to the cytoplasm. The catalysed reaction is (R)-4'-phosphopantetheine + ATP + H(+) = 3'-dephospho-CoA + diphosphate. Its pathway is cofactor biosynthesis; coenzyme A biosynthesis; CoA from (R)-pantothenate: step 4/5. Reversibly transfers an adenylyl group from ATP to 4'-phosphopantetheine, yielding dephospho-CoA (dPCoA) and pyrophosphate. This Levilactobacillus brevis (strain ATCC 367 / BCRC 12310 / CIP 105137 / JCM 1170 / LMG 11437 / NCIMB 947 / NCTC 947) (Lactobacillus brevis) protein is Phosphopantetheine adenylyltransferase.